The chain runs to 232 residues: tRNA (guanine-N(7)-)-methyltransferase (232 aa).

Residues glutamate 63, glutamate 88, aspartate 115, and aspartate 137 each contribute to the S-adenosyl-L-methionine site. Aspartate 137 is a catalytic residue. Substrate contacts are provided by residues lysine 141, aspartate 173, and 211–214; that span reads TRYE.

It belongs to the class I-like SAM-binding methyltransferase superfamily. TrmB family.

The enzyme catalyses guanosine(46) in tRNA + S-adenosyl-L-methionine = N(7)-methylguanosine(46) in tRNA + S-adenosyl-L-homocysteine. The protein operates within tRNA modification; N(7)-methylguanine-tRNA biosynthesis. In terms of biological role, catalyzes the formation of N(7)-methylguanine at position 46 (m7G46) in tRNA. This Rhizobium meliloti (strain 1021) (Ensifer meliloti) protein is tRNA (guanine-N(7)-)-methyltransferase.